Here is a 422-residue protein sequence, read N- to C-terminus: UDP-N-acetylglucosamine 1-carboxyvinyltransferase (422 aa).

22–23 (KN) contributes to the phosphoenolpyruvate binding site. Residue Arg94 participates in UDP-N-acetyl-alpha-D-glucosamine binding. The active-site Proton donor is Cys118. Residue Cys118 is modified to 2-(S-cysteinyl)pyruvic acid O-phosphothioketal. Residues 123–127 (RPVDL), Asp309, and Ile331 each bind UDP-N-acetyl-alpha-D-glucosamine.

This sequence belongs to the EPSP synthase family. MurA subfamily.

Its subcellular location is the cytoplasm. The catalysed reaction is phosphoenolpyruvate + UDP-N-acetyl-alpha-D-glucosamine = UDP-N-acetyl-3-O-(1-carboxyvinyl)-alpha-D-glucosamine + phosphate. It functions in the pathway cell wall biogenesis; peptidoglycan biosynthesis. In terms of biological role, cell wall formation. Adds enolpyruvyl to UDP-N-acetylglucosamine. The protein is UDP-N-acetylglucosamine 1-carboxyvinyltransferase of Cereibacter sphaeroides (strain ATCC 17029 / ATH 2.4.9) (Rhodobacter sphaeroides).